The chain runs to 205 residues: ATP phosphoribosyltransferase (205 aa).

This sequence belongs to the ATP phosphoribosyltransferase family. Short subfamily. As to quaternary structure, heteromultimer composed of HisG and HisZ subunits.

The protein localises to the cytoplasm. The catalysed reaction is 1-(5-phospho-beta-D-ribosyl)-ATP + diphosphate = 5-phospho-alpha-D-ribose 1-diphosphate + ATP. It participates in amino-acid biosynthesis; L-histidine biosynthesis; L-histidine from 5-phospho-alpha-D-ribose 1-diphosphate: step 1/9. Catalyzes the condensation of ATP and 5-phosphoribose 1-diphosphate to form N'-(5'-phosphoribosyl)-ATP (PR-ATP). Has a crucial role in the pathway because the rate of histidine biosynthesis seems to be controlled primarily by regulation of HisG enzymatic activity. This Staphylococcus carnosus (strain TM300) protein is ATP phosphoribosyltransferase.